The following is a 432-amino-acid chain: Acetylserotonin O-methyltransferase (432 aa).

Residues tyrosine 146, tryptophan 163, aspartate 209, 235 to 237, and arginine 252 each bind S-adenosyl-L-methionine; that span reads GDF. Histidine 255 acts as the Proton donor/acceptor in catalysis. 3 residues coordinate substrate: aspartate 256, asparagine 302, and glutamine 306. Residues 373–432 form a disordered region; that stretch reads VPGARSDAAGTGSGTGNTGSGIMLQGETLESEVSAPQAGSDVGGAGNEPRSGTLKQGDWK.

This sequence belongs to the class I-like SAM-binding methyltransferase superfamily. Cation-independent O-methyltransferase family. In terms of assembly, homodimer. As to expression, expressed predominantly in the pineal gland (at protein level). Very low expression, if any, in the retina.

The enzyme catalyses N-acetylserotonin + S-adenosyl-L-methionine = melatonin + S-adenosyl-L-homocysteine + H(+). It functions in the pathway aromatic compound metabolism; melatonin biosynthesis; melatonin from serotonin: step 1/2. Its function is as follows. Catalyzes the transfer of a methyl group onto N-acetylserotonin, producing melatonin (N-acetyl-5-methoxytryptamine). The protein is Acetylserotonin O-methyltransferase (Asmt) of Rattus norvegicus (Rat).